The following is a 633-amino-acid chain: Basic helix-loop-helix ARNT-like protein 1 (633 aa).

Residues 1 to 65 (MADQRMDISS…GMDTDKDDQH (65 aa)) are disordered. Residue S17 is modified to Phosphoserine; by GSK3-beta. The span at 24-33 (ISSSLSTSGV) shows a compositional bias: polar residues. The Nuclear localization signal signature appears at 36–41 (NRKRKG). Residues 79 to 132 (NAREAHSQIEKRRRDKMNSFIDELASLVPTCNAMSRKLDKLTVLRMAVQHMKTL) form the bHLH domain. S85 bears the Phosphoserine mark. At S97 the chain carries Phosphoserine; by CK2. Positions 149-159 (LSDDELKHLIL) match the Nuclear export signal 1 motif. The PAS 1 domain occupies 150 to 222 (SDDELKHLIL…EQLSSSDTAP (73 aa)). K259 participates in a covalent cross-link: Glycyl lysine isopeptide (Lys-Gly) (interchain with G-Cter in SUMO2 and SUMO3). K266 is covalently cross-linked (Glycyl lysine isopeptide (Lys-Gly) (interchain with G-Cter in SUMO)). In terms of domain architecture, PAS 2 spans 333 to 403 (PQPVNGEIRV…ECHRQVLQTR (71 aa)). The short motif at 368 to 376 (LAYLPQELL) is the Nuclear export signal 2 element. In terms of domain architecture, PAC spans 408–451 (TNCYKFKIKDGSFITLRSRWFSFMNPWTKEVEYIVSTNTVVSTS). Disordered regions lie at residues 469–499 (SMDSVLQAGEGGPKRSHPTVPGIPGGTRAGA) and 518–578 (GSSP…DNSS). A compositionally biased stretch (low complexity) spans 518–528 (GSSPSSCGSSP). N6-acetyllysine is present on K545. Residues 563–578 (GQIQDSSGYPYSDNSS) show a composition bias toward polar residues.

Component of the circadian clock oscillator which includes the CRY1/2 proteins, CLOCK or NPAS2, BMAL1 or BMAL2, CSNK1D and/or CSNK1E, TIMELESS and the PER1/2/3 proteins. Forms a heterodimer with CLOCK. The CLOCK-BMAL1 heterodimer is required for E-box-dependent transactivation, for CLOCK nuclear translocation and degradation, and, for phosphorylation of both CLOCK and BMAL1. Interacts with PER1, PER2, CRY1 and CRY2 and this interaction requires a translocation to the nucleus. Interaction of the CLOCK-BMAL1 heterodimer with PER or CRY inhibits transcription activation. Interacts with NPAS2. Ubiquitinated, leading to its proteasomal degradation. Deubiquitinated by USP9X. Post-translationally, O-glycosylated; contains O-GlcNAc. O-glycosylation by OGT prevents protein degradation by inhibiting ubiquitination. It also stabilizes the CLOCK-BMAL1 heterodimer thereby increasing CLOCK-BMAL1-mediated transcription of genes in the negative loop of the circadian clock such as PER1/2/3 and CRY1/2. In terms of processing, acetylated on Lys-545 by CLOCK during the repression phase of the circadian cycle. Acetylation facilitates recruitment of CRY1 protein and initiates the repression phase of the circadian cycle. Acetylated at Lys-545 by KAT5 during the activation phase of the cycle, leading to recruitment of the positive transcription elongation factor b (P-TEFb) and BRD4, followed by productive elongation of circadian transcripts. Deacetylated by SIRT1, which may result in decreased protein stability. Phosphorylated upon dimerization with CLOCK. Phosphorylation enhances the transcriptional activity, alters the subcellular localization and decreases the stability of the CLOCK-BMAL1 heterodimer by promoting its degradation. Phosphorylation shows circadian variations in the liver with a peak between CT10 to CT14. Phosphorylation at Ser-97 by CK2 is essential for its nuclear localization, its interaction with CLOCK and controls CLOCK nuclear entry. Dephosphorylation at Ser-85 is important for dimerization with CLOCK and transcriptional activity. Post-translationally, sumoylated on Lys-266 upon dimerization with CLOCK. Predominantly conjugated to poly-SUMO2/3 rather than SUMO1 and the level of these conjugates undergo rhythmic variation, peaking at CT9-CT12. Sumoylation localizes it exclusively to the PML body and promotes its ubiquitination in the PML body, ubiquitin-dependent proteasomal degradation and the transcriptional activity of the CLOCK-BMAL1 heterodimer. In terms of processing, undergoes lysosome-mediated degradation in a time-dependent manner in the liver. As to expression, expressed in pineal gland and retina.

The protein resides in the nucleus. Its subcellular location is the cytoplasm. It localises to the PML body. Transcriptional activator which forms a core component of the circadian clock. The circadian clock, an internal time-keeping system, regulates various physiological processes through the generation of approximately 24 hour circadian rhythms in gene expression, which are translated into rhythms in metabolism and behavior. It is derived from the Latin roots 'circa' (about) and 'diem' (day) and acts as an important regulator of a wide array of physiological functions including metabolism, sleep, body temperature, blood pressure, endocrine, immune, cardiovascular, and renal function. Consists of two major components: the central clock, residing in the suprachiasmatic nucleus (SCN) of the brain, and the peripheral clocks that are present in nearly every tissue and organ system. Both the central and peripheral clocks can be reset by environmental cues, also known as Zeitgebers (German for 'timegivers'). The predominant Zeitgeber for the central clock is light, which is sensed by retina and signals directly to the SCN. The central clock entrains the peripheral clocks through neuronal and hormonal signals, body temperature and feeding-related cues, aligning all clocks with the external light/dark cycle. Circadian rhythms allow an organism to achieve temporal homeostasis with its environment at the molecular level by regulating gene expression to create a peak of protein expression once every 24 hours to control when a particular physiological process is most active with respect to the solar day. Transcription and translation of core clock components (CLOCK, NPAS2, BMAL1, BMAL2, PER1, PER2, PER3, CRY1 and CRY2) plays a critical role in rhythm generation, whereas delays imposed by post-translational modifications (PTMs) are important for determining the period (tau) of the rhythms (tau refers to the period of a rhythm and is the length, in time, of one complete cycle). A diurnal rhythm is synchronized with the day/night cycle, while the ultradian and infradian rhythms have a period shorter and longer than 24 hours, respectively. Disruptions in the circadian rhythms contribute to the pathology of cardiovascular diseases, cancer, metabolic syndromes and aging. A transcription/translation feedback loop (TTFL) forms the core of the molecular circadian clock mechanism. Transcription factors, CLOCK or NPAS2 and BMAL1 or BMAL2, form the positive limb of the feedback loop, act in the form of a heterodimer and activate the transcription of core clock genes and clock-controlled genes (involved in key metabolic processes), harboring E-box elements (5'-CACGTG-3') within their promoters. The core clock genes: PER1/2/3 and CRY1/2 which are transcriptional repressors form the negative limb of the feedback loop and interact with the CLOCK|NPAS2-BMAL1|BMAL2 heterodimer inhibiting its activity and thereby negatively regulating their own expression. This heterodimer also activates nuclear receptors NR1D1/2 and RORA/B/G, which form a second feedback loop and which activate and repress BMAL1 transcription, respectively. The preferred binding motif for the CLOCK-BMAL1 heterodimer is 5'-CACGTGA-3', which contains a flanking adenine nucleotide at the 3-prime end of the canonical 6-nucleotide E-box sequence. CLOCK specifically binds to the half-site 5'-CAC-3', while BMAL1 binds to the half-site 5'-GTGA-3'. Essential for the rhythmic interaction of CLOCK with ASS1 and plays a critical role in positively regulating CLOCK-mediated acetylation of ASS1. Plays a role in protecting against lethal sepsis by limiting the expression of immune checkpoint protein CD274 in macrophages in a PKM2-dependent manner. The polypeptide is Basic helix-loop-helix ARNT-like protein 1 (BMAL1) (Gallus gallus (Chicken)).